The primary structure comprises 440 residues: Tyrosine--tRNA ligase (440 aa).

Tyr46 provides a ligand contact to L-tyrosine. Positions 51–60 match the 'HIGH' region motif; it reads PTAASLHIGN. L-tyrosine contacts are provided by Tyr181 and Gln185. A 'KMSKS' region motif is present at residues 241-245; that stretch reads KFGKS. An ATP-binding site is contributed by Lys244. Residues 373–439 form the S4 RNA-binding domain; the sequence is DRVIDAAQAA…GKKALGAVEN (67 aa).

The protein belongs to the class-I aminoacyl-tRNA synthetase family. TyrS type 1 subfamily. In terms of assembly, homodimer.

It localises to the cytoplasm. It catalyses the reaction tRNA(Tyr) + L-tyrosine + ATP = L-tyrosyl-tRNA(Tyr) + AMP + diphosphate + H(+). In terms of biological role, catalyzes the attachment of tyrosine to tRNA(Tyr) in a two-step reaction: tyrosine is first activated by ATP to form Tyr-AMP and then transferred to the acceptor end of tRNA(Tyr). This Bifidobacterium longum (strain NCC 2705) protein is Tyrosine--tRNA ligase.